A 20-amino-acid chain; its full sequence is Cytochrome P450-RR1 (20 aa).

Belongs to the cytochrome P450 family. The cofactor is heme.

Functionally, P450-RRI catalyzes the O-dealkylation of 2-ethoxyphenol and 2-methoxyphenol to produce catechol. The cytochrome binds other ortho-substituted phenols, including 2-ethoxyphenol, 2-methylphenol and 2-chlorophenol. The protein is Cytochrome P450-RR1 of Rhodococcus rhodochrous.